A 339-amino-acid polypeptide reads, in one-letter code: Tetraacyldisaccharide 4'-kinase (339 aa).

An ATP-binding site is contributed by 62–69; the sequence is VAGGTGKT.

Belongs to the LpxK family.

The catalysed reaction is a lipid A disaccharide + ATP = a lipid IVA + ADP + H(+). Its pathway is glycolipid biosynthesis; lipid IV(A) biosynthesis; lipid IV(A) from (3R)-3-hydroxytetradecanoyl-[acyl-carrier-protein] and UDP-N-acetyl-alpha-D-glucosamine: step 6/6. In terms of biological role, transfers the gamma-phosphate of ATP to the 4'-position of a tetraacyldisaccharide 1-phosphate intermediate (termed DS-1-P) to form tetraacyldisaccharide 1,4'-bis-phosphate (lipid IVA). The sequence is that of Tetraacyldisaccharide 4'-kinase from Xylella fastidiosa (strain M23).